The following is a 480-amino-acid chain: MFS-type transporter oryF (480 aa).

Positions 1 to 10 (MAEEVNERTR) are enriched in basic and acidic residues. The interval 1-24 (MAEEVNERTRLLSQSDDPSPSLEE) is disordered. Over residues 11-22 (LLSQSDDPSPSL) the composition is skewed to low complexity. 12 helical membrane passes run 41-61 (LCIA…AIIV), 81-101 (AFVS…GPLS), 107-127 (ISLL…CAFA), 138-158 (FITG…IGDL), 170-190 (LYTL…AYIV), 197-217 (AIFA…LCTL), 264-284 (FLGT…LFGL), 308-328 (ALNY…TGSL), 351-371 (ILML…GWSA), 378-398 (IMPN…YQCI), 415-435 (GALT…APLI), and 443-463 (WGSS…PILL).

It belongs to the major facilitator superfamily.

It localises to the membrane. Functionally, MFS-type transporter; part of the gene cluster that mediates the biosynthesis of oryzines, natural products with an unusual maleidride backbone. This is MFS-type transporter oryF from Aspergillus oryzae (strain ATCC 42149 / RIB 40) (Yellow koji mold).